Consider the following 477-residue polypeptide: Stromelysin-1 (477 aa).

Residues 1–17 form the signal peptide; the sequence is MKSLPILLLLCVAVCSA. The propeptide at 18 to 99 is activation peptide; it reads YPLDGAARGE…PRCGVPDVGH (82 aa). A Cysteine switch motif is present at residues 90 to 97; that stretch reads PRCGVPDV. Residue Cys-92 participates in Zn(2+) binding. Residues Asp-124 and Asp-158 each contribute to the Ca(2+) site. 2 residues coordinate Zn(2+): His-168 and Asp-170. The Ca(2+) site is built by Asp-175, Gly-176, Gly-178, and Val-180. His-183 is a Zn(2+) binding site. Residues Gly-190, Asn-192, and Asp-194 each contribute to the Ca(2+) site. A Zn(2+)-binding site is contributed by His-196. Residues Asp-198, Asp-199, and Glu-201 each contribute to the Ca(2+) site. Zn(2+) is bound at residue His-218. The active site involves Glu-219. The Zn(2+) site is built by His-222 and His-228. The tract at residues 262–287 is disordered; that stretch reads LYGPPPDSPETPLVPTEPVPPEPGTP. A compositionally biased stretch (pro residues) spans 276-285; sequence PTEPVPPEPG. Hemopexin repeat units follow at residues 287-336, 337-383, 385-433, and 434-477; these read PANC…WPSL, PSGV…GFPP, VRKI…FPGI, and DSKI…WLNC. Cys-290 and Cys-477 form a disulfide bridge. Position 297 (Asp-297) interacts with Ca(2+). Asp-389 and Asp-438 together coordinate Ca(2+).

Belongs to the peptidase M10A family. Requires Ca(2+) as cofactor. The cofactor is Zn(2+). Directly cleaved by HTRA2 to produce active form.

It is found in the secreted. The protein resides in the extracellular space. It localises to the extracellular matrix. Its subcellular location is the nucleus. The protein localises to the cytoplasm. It catalyses the reaction Preferential cleavage where P1', P2' and P3' are hydrophobic residues.. Its activity is regulated as follows. Enzymatic activity is activated by HTRA2 in dopaminergic cells upon mitochondrial stress. Functionally, metalloproteinase with a rather broad substrate specificity that can degrade fibronectin, laminin, gelatins of type I, III, IV, and V; collagens III, IV, X, and IX, and cartilage proteoglycans. Activates different molecules including growth factors, plasminogen or other matrix metalloproteinases such as MMP9. Once released into the extracellular matrix (ECM), the inactive pro-enzyme is activated by the plasmin cascade signaling pathway. Also acts intracellularly. For example, in dopaminergic neurons, gets activated by the serine protease HTRA2 upon stress and plays a pivotal role in DA neuronal degeneration by mediating microglial activation and alpha-synuclein/SNCA cleavage. In addition, plays a role in immune response and possesses antiviral activity against various viruses such as vesicular stomatitis virus, influenza A virus (H1N1) and human herpes virus 1. Mechanistically, translocates from the cytoplasm into the cell nucleus upon virus infection to influence NF-kappa-B activities. In Homo sapiens (Human), this protein is Stromelysin-1 (MMP3).